We begin with the raw amino-acid sequence, 526 residues long: Peptide chain release factor 3 (526 aa).

Positions 9 to 277 constitute a tr-type G domain; the sequence is DKRRTFAIIS…GIVEWAPKPQ (269 aa). GTP contacts are provided by residues 18-25, 86-90, and 140-143; these read SHPDAGKT, DTPGH, and NKLD.

This sequence belongs to the TRAFAC class translation factor GTPase superfamily. Classic translation factor GTPase family. PrfC subfamily.

It localises to the cytoplasm. Functionally, increases the formation of ribosomal termination complexes and stimulates activities of RF-1 and RF-2. It binds guanine nucleotides and has strong preference for UGA stop codons. It may interact directly with the ribosome. The stimulation of RF-1 and RF-2 is significantly reduced by GTP and GDP, but not by GMP. This chain is Peptide chain release factor 3, found in Shewanella sediminis (strain HAW-EB3).